A 378-amino-acid chain; its full sequence is Ribosomal RNA large subunit methyltransferase G (378 aa).

It belongs to the methyltransferase superfamily. RlmG family.

It is found in the cytoplasm. The enzyme catalyses guanosine(1835) in 23S rRNA + S-adenosyl-L-methionine = N(2)-methylguanosine(1835) in 23S rRNA + S-adenosyl-L-homocysteine + H(+). Its function is as follows. Specifically methylates the guanine in position 1835 (m2G1835) of 23S rRNA. The protein is Ribosomal RNA large subunit methyltransferase G of Salmonella dublin (strain CT_02021853).